We begin with the raw amino-acid sequence, 185 residues long: Probable chorismate pyruvate-lyase (185 aa).

3 residues coordinate substrate: Arg80, Leu118, and Glu170.

It belongs to the UbiC family.

It localises to the cytoplasm. It catalyses the reaction chorismate = 4-hydroxybenzoate + pyruvate. It functions in the pathway cofactor biosynthesis; ubiquinone biosynthesis. Its function is as follows. Removes the pyruvyl group from chorismate, with concomitant aromatization of the ring, to provide 4-hydroxybenzoate (4HB) for the ubiquinone pathway. The sequence is that of Probable chorismate pyruvate-lyase from Pseudomonas putida (strain ATCC 47054 / DSM 6125 / CFBP 8728 / NCIMB 11950 / KT2440).